Consider the following 267-residue polypeptide: Meiosis-specific protein ISC10 (267 aa).

The span at 1 to 13 (MDVDERLHQDENQ) shows a compositional bias: basic and acidic residues. Positions 1–26 (MDVDERLHQDENQTHPFSQKKSSSFL) are disordered. The span at 14–25 (THPFSQKKSSSF) shows a compositional bias: polar residues.

Its function is as follows. Indispensable for spore formation. The polypeptide is Meiosis-specific protein ISC10 (ISC10) (Saccharomyces cerevisiae (strain ATCC 204508 / S288c) (Baker's yeast)).